Here is a 120-residue protein sequence, read N- to C-terminus: NAD(P)H-quinone oxidoreductase subunit 3 (120 aa).

A run of 3 helical transmembrane segments spans residues 10-30 (LLVF…ASAL), 64-84 (MFAL…PWAV), and 89-109 (LGLL…VGLV).

It belongs to the complex I subunit 3 family. NDH-1 can be composed of about 15 different subunits; different subcomplexes with different compositions have been identified which probably have different functions.

It localises to the cellular thylakoid membrane. It catalyses the reaction a plastoquinone + NADH + (n+1) H(+)(in) = a plastoquinol + NAD(+) + n H(+)(out). It carries out the reaction a plastoquinone + NADPH + (n+1) H(+)(in) = a plastoquinol + NADP(+) + n H(+)(out). Its function is as follows. NDH-1 shuttles electrons from an unknown electron donor, via FMN and iron-sulfur (Fe-S) centers, to quinones in the respiratory and/or the photosynthetic chain. The immediate electron acceptor for the enzyme in this species is believed to be plastoquinone. Couples the redox reaction to proton translocation, and thus conserves the redox energy in a proton gradient. Cyanobacterial NDH-1 also plays a role in inorganic carbon-concentration. The chain is NAD(P)H-quinone oxidoreductase subunit 3 from Synechococcus sp. (strain JA-3-3Ab) (Cyanobacteria bacterium Yellowstone A-Prime).